Reading from the N-terminus, the 446-residue chain is tRNA modification GTPase MnmE (446 aa).

(6S)-5-formyl-5,6,7,8-tetrahydrofolate contacts are provided by Arg-28, Glu-85, and Lys-124. Residues 220 to 372 form the TrmE-type G domain; that stretch reads GLTVVLVGQP…LRAKLLQAAG (153 aa). Asn-230 contributes to the K(+) binding site. Residues 230 to 235, 249 to 255, and 274 to 277 each bind GTP; these read NVGKSS, TEIAGTT, and DTAG. A Mg(2+)-binding site is contributed by Ser-234. Thr-249, Ile-251, and Thr-254 together coordinate K(+). Thr-255 lines the Mg(2+) pocket. Residue Lys-446 coordinates (6S)-5-formyl-5,6,7,8-tetrahydrofolate.

It belongs to the TRAFAC class TrmE-Era-EngA-EngB-Septin-like GTPase superfamily. TrmE GTPase family. In terms of assembly, homodimer. Heterotetramer of two MnmE and two MnmG subunits. K(+) is required as a cofactor.

It localises to the cytoplasm. Its function is as follows. Exhibits a very high intrinsic GTPase hydrolysis rate. Involved in the addition of a carboxymethylaminomethyl (cmnm) group at the wobble position (U34) of certain tRNAs, forming tRNA-cmnm(5)s(2)U34. This Thiobacillus denitrificans (strain ATCC 25259 / T1) protein is tRNA modification GTPase MnmE.